Consider the following 224-residue polypeptide: Orotate phosphoribosyltransferase (224 aa).

Residues Lys26, 73–74 (YK), Arg100, Lys101, Lys104, His106, and 127–135 (EDVTTAGTS) each bind 5-phospho-alpha-D-ribose 1-diphosphate. Thr131 and Arg160 together coordinate orotate.

The protein belongs to the purine/pyrimidine phosphoribosyltransferase family. PyrE subfamily. In terms of assembly, homodimer. It depends on Mg(2+) as a cofactor.

The enzyme catalyses orotidine 5'-phosphate + diphosphate = orotate + 5-phospho-alpha-D-ribose 1-diphosphate. The protein operates within pyrimidine metabolism; UMP biosynthesis via de novo pathway; UMP from orotate: step 1/2. Catalyzes the transfer of a ribosyl phosphate group from 5-phosphoribose 1-diphosphate to orotate, leading to the formation of orotidine monophosphate (OMP). This Clostridium beijerinckii (strain ATCC 51743 / NCIMB 8052) (Clostridium acetobutylicum) protein is Orotate phosphoribosyltransferase.